A 189-amino-acid chain; its full sequence is dTTP/UTP pyrophosphatase (189 aa).

Aspartate 70 (proton acceptor) is an active-site residue.

It belongs to the Maf family. YhdE subfamily. A divalent metal cation serves as cofactor.

The protein localises to the cytoplasm. It carries out the reaction dTTP + H2O = dTMP + diphosphate + H(+). The enzyme catalyses UTP + H2O = UMP + diphosphate + H(+). Nucleoside triphosphate pyrophosphatase that hydrolyzes dTTP and UTP. May have a dual role in cell division arrest and in preventing the incorporation of modified nucleotides into cellular nucleic acids. The chain is dTTP/UTP pyrophosphatase from Akkermansia muciniphila (strain ATCC BAA-835 / DSM 22959 / JCM 33894 / BCRC 81048 / CCUG 64013 / CIP 107961 / Muc).